The chain runs to 219 residues: MSIQVFCDFDGTITNNDNIMSIMEKFAPPEAEEVKNRILSQELSIQEGVSQLFQFIPTNLHDEIIQFLIETAEIRNGFHEFIQFVNENNISFYVISGGMDFFVYPLLQGLIPKEQIYCNETDFSNEYITVNWPHPCDRLCQNHCGLCKSSLIRKLSDTNDFHIVIGDSITDLQAAKQADKVFARDFLITKCEENHISYTAFETFHDVQTELKHLLEVKL.

The protein belongs to the HAD-like hydrolase superfamily. MtnX family.

It carries out the reaction 2-hydroxy-5-methylsulfanyl-3-oxopent-1-enyl phosphate + H2O = 1,2-dihydroxy-5-(methylsulfanyl)pent-1-en-3-one + phosphate. It participates in amino-acid biosynthesis; L-methionine biosynthesis via salvage pathway; L-methionine from S-methyl-5-thio-alpha-D-ribose 1-phosphate: step 4/6. Its function is as follows. Dephosphorylates 2-hydroxy-3-keto-5-methylthiopentenyl-1-phosphate (HK-MTPenyl-1-P) yielding 1,2-dihydroxy-3-keto-5-methylthiopentene (DHK-MTPene). In Bacillus cereus (strain AH187), this protein is 2-hydroxy-3-keto-5-methylthiopentenyl-1-phosphate phosphatase.